A 342-amino-acid chain; its full sequence is Probable dual-specificity RNA methyltransferase RlmN (342 aa).

The active-site Proton acceptor is the Glu91. Residues Tyr97–Asp327 enclose the Radical SAM core domain. Cys104 and Cys332 are oxidised to a cystine. Positions 111, 115, and 118 each coordinate [4Fe-4S] cluster. S-adenosyl-L-methionine-binding positions include Gly158–Glu159, Ser190, Ser213–His215, and Asn289. Cys332 serves as the catalytic S-methylcysteine intermediate.

Belongs to the radical SAM superfamily. RlmN family. [4Fe-4S] cluster serves as cofactor.

The protein resides in the cytoplasm. The catalysed reaction is adenosine(2503) in 23S rRNA + 2 reduced [2Fe-2S]-[ferredoxin] + 2 S-adenosyl-L-methionine = 2-methyladenosine(2503) in 23S rRNA + 5'-deoxyadenosine + L-methionine + 2 oxidized [2Fe-2S]-[ferredoxin] + S-adenosyl-L-homocysteine. It carries out the reaction adenosine(37) in tRNA + 2 reduced [2Fe-2S]-[ferredoxin] + 2 S-adenosyl-L-methionine = 2-methyladenosine(37) in tRNA + 5'-deoxyadenosine + L-methionine + 2 oxidized [2Fe-2S]-[ferredoxin] + S-adenosyl-L-homocysteine. Its function is as follows. Specifically methylates position 2 of adenine 2503 in 23S rRNA and position 2 of adenine 37 in tRNAs. The chain is Probable dual-specificity RNA methyltransferase RlmN from Clostridium botulinum (strain Loch Maree / Type A3).